Consider the following 217-residue polypeptide: Peroxiredoxin Q, chloroplastic (217 aa).

Residues 1–66 constitute a chloroplast transit peptide; that stretch reads MAFAASTACC…RRRAASTGIV (66 aa). The region spanning 70-217 is the Thioredoxin domain; that stretch reads VSKGSVPPNF…GETLKIIQNL (148 aa). The active-site Cysteine sulfenic acid (-SOH) intermediate is Cys-112. Cys-112 and Cys-117 form a disulfide bridge.

Belongs to the peroxiredoxin family. BCP/PrxQ subfamily. Monomer.

Its subcellular location is the plastid. It is found in the chloroplast thylakoid lumen. It carries out the reaction a hydroperoxide + [thioredoxin]-dithiol = an alcohol + [thioredoxin]-disulfide + H2O. Thiol-specific peroxidase that catalyzes the reduction of hydrogen peroxide and organic hydroperoxides to water and alcohols, respectively. Plays a role in cell protection against oxidative stress by detoxifying peroxides. In Triticum aestivum (Wheat), this protein is Peroxiredoxin Q, chloroplastic (PRX1).